The chain runs to 1939 residues: Myosin-4 (1939 aa).

The Myosin N-terminal SH3-like domain occupies 33 to 82; sequence DAKSSVFVVDAKESYVKATVQSREGGKVTAKTEGGATVTVKEDQVFSMNP. Residue S36 is modified to Phosphoserine. A phosphothreonine mark is found at T64 and T69. S79 carries the phosphoserine modification. Positions 86-782 constitute a Myosin motor domain; the sequence is DKIEDMAMMT…LLGTLEEMRD (697 aa). K130 carries the N6,N6,N6-trimethyllysine modification. 179 to 186 is an ATP binding site; it reads GESGAGKT. Residue Y389 is modified to Phosphotyrosine. T391 is modified (phosphothreonine). S392 is modified (phosphoserine). T419 carries the phosphothreonine modification. Y424 bears the Phosphotyrosine mark. Phosphoserine is present on S625. The tract at residues 659–681 is actin-binding; it reads LNKLMTNLKSTHPHFVRCLIPNE. At H757 the chain carries Pros-methylhistidine. The interval 761–775 is actin-binding; it reads KFGHTKVFFKAGLLG. At T776 the chain carries Phosphothreonine. The region spanning 785–814 is the IQ domain; it reads LAQLITRTQAVCRGYLMRVEFRKMMERRES. Positions 843–1939 form a coiled coil; the sequence is LLKSAETEKE…EVHTKVISEE (1097 aa). S1092 and S1096 each carry phosphoserine. 2 disordered regions span residues 1128 to 1147 and 1153 to 1172; these read AERA…SREL and RLEE…KKRE. Residues S1162 and S1237 each carry the phosphoserine modification. At T1241 the chain carries Phosphothreonine. A Phosphoserine modification is found at S1243. Residue T1255 is modified to Phosphothreonine. A Phosphoserine modification is found at S1261. Residue T1265 is modified to Phosphothreonine. S1278 is subject to Phosphoserine. T1286 is modified (phosphothreonine). S1288, S1292, S1303, S1306, and S1413 each carry phosphoserine. At Y1464 the chain carries Phosphotyrosine. Phosphothreonine is present on T1467. A Phosphoserine modification is found at S1474. At Y1492 the chain carries Phosphotyrosine. S1495 is subject to Phosphoserine. T1501 carries the phosphothreonine modification. The residue at position 1514 (S1514) is a Phosphoserine. T1517 bears the Phosphothreonine mark. Phosphoserine occurs at positions 1542, 1547, 1554, 1574, 1600, 1603, 1714, and 1726. T1730 and T1736 each carry phosphothreonine. S1739 carries the post-translational modification Phosphoserine.

The protein belongs to the TRAFAC class myosin-kinesin ATPase superfamily. Myosin family. As to quaternary structure, muscle myosin is a hexameric protein that consists of 2 heavy chain subunits (MHC), 2 alkali light chain subunits (MLC) and 2 regulatory light chain subunits (MLC-2).

Its subcellular location is the cytoplasm. The protein localises to the myofibril. Functionally, muscle contraction. In Rattus norvegicus (Rat), this protein is Myosin-4.